Consider the following 370-residue polypeptide: Putative agmatine deiminase (370 aa).

Catalysis depends on Cys361, which acts as the Amidino-cysteine intermediate.

It belongs to the agmatine deiminase family.

The enzyme catalyses agmatine + H2O = N-carbamoylputrescine + NH4(+). The sequence is that of Putative agmatine deiminase from Shewanella baltica (strain OS185).